Consider the following 459-residue polypeptide: Putrescine aminotransferase (459 aa).

Pyridoxal 5'-phosphate is bound by residues 150–151 (GT) and Gln274. Lys300 is modified (N6-(pyridoxal phosphate)lysine). A pyridoxal 5'-phosphate-binding site is contributed by Thr332.

It belongs to the class-III pyridoxal-phosphate-dependent aminotransferase family. Putrescine aminotransferase subfamily. Requires pyridoxal 5'-phosphate as cofactor.

It catalyses the reaction an alkane-alpha,omega-diamine + 2-oxoglutarate = an omega-aminoaldehyde + L-glutamate. It carries out the reaction putrescine + 2-oxoglutarate = 1-pyrroline + L-glutamate + H2O. The catalysed reaction is cadaverine + 2-oxoglutarate = 5-aminopentanal + L-glutamate. It participates in amine and polyamine degradation; putrescine degradation; 4-aminobutanal from putrescine (transaminase route): step 1/1. Catalyzes the aminotransferase reaction from putrescine to 2-oxoglutarate, leading to glutamate and 4-aminobutanal, which spontaneously cyclizes to form 1-pyrroline. This is the first step in one of two pathways for putrescine degradation, where putrescine is converted into 4-aminobutanoate (gamma-aminobutyrate or GABA) via 4-aminobutanal. Also functions as a cadaverine transaminase in a a L-lysine degradation pathway to succinate that proceeds via cadaverine, glutarate and L-2-hydroxyglutarate. The protein is Putrescine aminotransferase of Escherichia coli O17:K52:H18 (strain UMN026 / ExPEC).